The primary structure comprises 446 residues: tRNA modification GTPase MnmE (446 aa).

The (6S)-5-formyl-5,6,7,8-tetrahydrofolate site is built by Arg21, Glu77, and Lys116. The TrmE-type G domain maps to 212 to 370 (GFRIALIGAP…LRAALASHVA (159 aa)). Asn222 contributes to the K(+) binding site. Residues 222–227 (NAGKST), 241–247 (TDVAGTT), and 266–269 (DTAG) each bind GTP. Ser226 serves as a coordination point for Mg(2+). The K(+) site is built by Thr241, Val243, and Thr246. Thr247 provides a ligand contact to Mg(2+). (6S)-5-formyl-5,6,7,8-tetrahydrofolate is bound at residue Lys446.

It belongs to the TRAFAC class TrmE-Era-EngA-EngB-Septin-like GTPase superfamily. TrmE GTPase family. Homodimer. Heterotetramer of two MnmE and two MnmG subunits. It depends on K(+) as a cofactor.

The protein localises to the cytoplasm. Functionally, exhibits a very high intrinsic GTPase hydrolysis rate. Involved in the addition of a carboxymethylaminomethyl (cmnm) group at the wobble position (U34) of certain tRNAs, forming tRNA-cmnm(5)s(2)U34. The sequence is that of tRNA modification GTPase MnmE from Caulobacter vibrioides (strain ATCC 19089 / CIP 103742 / CB 15) (Caulobacter crescentus).